An 871-amino-acid chain; its full sequence is Alanine--tRNA ligase (871 aa).

Positions 563, 567, 665, and 669 each coordinate Zn(2+).

This sequence belongs to the class-II aminoacyl-tRNA synthetase family. Requires Zn(2+) as cofactor.

It is found in the cytoplasm. It catalyses the reaction tRNA(Ala) + L-alanine + ATP = L-alanyl-tRNA(Ala) + AMP + diphosphate. Functionally, catalyzes the attachment of alanine to tRNA(Ala) in a two-step reaction: alanine is first activated by ATP to form Ala-AMP and then transferred to the acceptor end of tRNA(Ala). Also edits incorrectly charged Ser-tRNA(Ala) and Gly-tRNA(Ala) via its editing domain. The polypeptide is Alanine--tRNA ligase (Christiangramia forsetii (strain DSM 17595 / CGMCC 1.15422 / KT0803) (Gramella forsetii)).